The primary structure comprises 85 residues: Large ribosomal subunit protein bL27 (85 aa).

The tract at residues 1-22 (MAHKKGASSTRNGRDSNAQRLG) is disordered. The span at 7-19 (ASSTRNGRDSNAQ) shows a compositional bias: polar residues.

This sequence belongs to the bacterial ribosomal protein bL27 family.

The sequence is that of Large ribosomal subunit protein bL27 from Leifsonia xyli subsp. xyli (strain CTCB07).